The chain runs to 145 residues: MSEQVETRLTPRERLTRGLAYSAVGPVDVTRGLLELGVGLGLQSARSTAAGLRRRYREGRLAREVAAAQETLAQELTAAQDVVANLPQALQDARTQRRSKHHLWIFAGIAAAILAGGAVAFSIVRRSSRPEPSPRPPSVEVQPRS.

A helical transmembrane segment spans residues 104–124 (WIFAGIAAAILAGGAVAFSIV).

Belongs to the CwsA family. In terms of assembly, interacts with CrgA and Wag31.

Its subcellular location is the cell membrane. In terms of biological role, required for regulated cell division, cell wall synthesis and the maintenance of cell shape. This chain is Cell wall synthesis protein CwsA, found in Mycobacterium tuberculosis (strain ATCC 25618 / H37Rv).